Reading from the N-terminus, the 714-residue chain is Phosphate acetyltransferase (714 aa).

A phosphate acetyltransferase region spans residues 391-714; sequence AFRYQLTELA…LTAIQSAQQQ (324 aa).

In the N-terminal section; belongs to the CobB/CobQ family. This sequence in the C-terminal section; belongs to the phosphate acetyltransferase and butyryltransferase family. Homohexamer.

The protein localises to the cytoplasm. The enzyme catalyses acetyl-CoA + phosphate = acetyl phosphate + CoA. It participates in metabolic intermediate biosynthesis; acetyl-CoA biosynthesis; acetyl-CoA from acetate: step 2/2. With respect to regulation, inhibited by NADH and ATP. Pyruvate and PEP act as activators of the acetyl phosphate forming reaction while inhibiting the formation of acetyl-CoA. Functionally, involved in acetate metabolism. Catalyzes the reversible interconversion of acetyl-CoA and acetyl phosphate. The direction of the overall reaction changes depending on growth conditions. On minimal medium acetyl-CoA is generated. In rich medium acetyl-CoA is converted to acetate and allowing the cell to dump the excess of acetylation potential in exchange for energy in the form of ATP. The main pathway for acetate production during exponential phase. The protein is Phosphate acetyltransferase (pta) of Escherichia coli (strain K12).